Consider the following 352-residue polypeptide: MTAALHIGHLSKSFQNTPVLNDISLSLDPGEILFIIGASGCGKTTLLRCLAGFEQPDSGEISLSGKTIFSKNTNLPVRETTFGLPRTGRCSVPHLTVYRNIAYGLGNGKGRTAQERQRIEAMLELTGISELAGRYPHELSGGQQQRVALARALAPDPELILLDEPFSALDEQLRRQIREDMIAALRANGKSAVFVSHDREEALQYADRIAVMKQGRILQTASPHELYRQPADLDAVLFIGEGIVFPAALNADGTADCRLGRLPVQSGAPAGTRGTLLIRPEQFSLHPHSAPVVSIHAVVLKTTPKARYTEISLRAGQTVLTLNLPSAPTLSDGISAVLHLDGPALFFPGNTL.

The ABC transporter domain maps to Leu-5–Ile-239. Residue Gly-37 to Thr-44 coordinates ATP.

This sequence belongs to the ABC transporter superfamily. Fe(3+) ion importer (TC 3.A.1.10) family. As to quaternary structure, the complex is composed of two ATP-binding proteins (FbpC), two transmembrane proteins (FbpB) and a solute-binding protein (FbpA).

The protein localises to the cell inner membrane. The catalysed reaction is Fe(3+)(out) + ATP + H2O = Fe(3+)(in) + ADP + phosphate + H(+). Functionally, part of the ABC transporter complex FbpABC involved in Fe(3+) ions import. Responsible for energy coupling to the transport system. This chain is Fe(3+) ions import ATP-binding protein FbpC, found in Neisseria gonorrhoeae.